A 490-amino-acid polypeptide reads, in one-letter code: Protein nucleotidyltransferase YdiU (490 aa).

ATP contacts are provided by G94, G96, R97, K117, D129, G130, R180, and R187. D256 functions as the Proton acceptor in the catalytic mechanism. 2 residues coordinate Mg(2+): N257 and D266. D266 contacts ATP.

The protein belongs to the SELO family. It depends on Mg(2+) as a cofactor. Mn(2+) is required as a cofactor.

It catalyses the reaction L-seryl-[protein] + ATP = 3-O-(5'-adenylyl)-L-seryl-[protein] + diphosphate. It carries out the reaction L-threonyl-[protein] + ATP = 3-O-(5'-adenylyl)-L-threonyl-[protein] + diphosphate. The catalysed reaction is L-tyrosyl-[protein] + ATP = O-(5'-adenylyl)-L-tyrosyl-[protein] + diphosphate. The enzyme catalyses L-histidyl-[protein] + UTP = N(tele)-(5'-uridylyl)-L-histidyl-[protein] + diphosphate. It catalyses the reaction L-seryl-[protein] + UTP = O-(5'-uridylyl)-L-seryl-[protein] + diphosphate. It carries out the reaction L-tyrosyl-[protein] + UTP = O-(5'-uridylyl)-L-tyrosyl-[protein] + diphosphate. Functionally, nucleotidyltransferase involved in the post-translational modification of proteins. It can catalyze the addition of adenosine monophosphate (AMP) or uridine monophosphate (UMP) to a protein, resulting in modifications known as AMPylation and UMPylation. This is Protein nucleotidyltransferase YdiU from Clostridium perfringens (strain 13 / Type A).